The following is a 145-amino-acid chain: UPF0201 protein Saci_1285 (145 aa).

It belongs to the UPF0201 family.

The protein is UPF0201 protein Saci_1285 of Sulfolobus acidocaldarius (strain ATCC 33909 / DSM 639 / JCM 8929 / NBRC 15157 / NCIMB 11770).